The chain runs to 500 residues: Cytochrome P450 2D27 (500 aa).

C446 lines the heme pocket.

Belongs to the cytochrome P450 family. It depends on heme as a cofactor. In terms of tissue distribution, expressed in liver, but not in kidney, small intestine, and brain.

The protein resides in the endoplasmic reticulum membrane. It localises to the microsome membrane. Has bufuralol 1'-hydroxylase and debrisoquine 4-hydroxylase activities. The chain is Cytochrome P450 2D27 (CYP2D27) from Mesocricetus auratus (Golden hamster).